The following is a 304-amino-acid chain: Elongation factor Ts (304 aa).

The tract at residues 79–82 is involved in Mg(2+) ion dislocation from EF-Tu; it reads TDFV.

This sequence belongs to the EF-Ts family.

It localises to the cytoplasm. Associates with the EF-Tu.GDP complex and induces the exchange of GDP to GTP. It remains bound to the aminoacyl-tRNA.EF-Tu.GTP complex up to the GTP hydrolysis stage on the ribosome. The chain is Elongation factor Ts from Polaromonas sp. (strain JS666 / ATCC BAA-500).